A 338-amino-acid chain; its full sequence is Lipoate-protein ligase A (338 aa).

The 188-residue stretch at 29-216 (PATQRVLFLW…AFFAHYGERV (188 aa)) folds into the BPL/LPL catalytic domain. Residues arginine 71, 76 to 79 (GAVF), and lysine 134 contribute to the ATP site. Residue lysine 134 coordinates (R)-lipoate.

This sequence belongs to the LplA family. As to quaternary structure, monomer.

It localises to the cytoplasm. It carries out the reaction L-lysyl-[lipoyl-carrier protein] + (R)-lipoate + ATP = N(6)-[(R)-lipoyl]-L-lysyl-[lipoyl-carrier protein] + AMP + diphosphate + H(+). Its pathway is protein modification; protein lipoylation via exogenous pathway; protein N(6)-(lipoyl)lysine from lipoate: step 1/2. It functions in the pathway protein modification; protein lipoylation via exogenous pathway; protein N(6)-(lipoyl)lysine from lipoate: step 2/2. In terms of biological role, catalyzes both the ATP-dependent activation of exogenously supplied lipoate to lipoyl-AMP and the transfer of the activated lipoyl onto the lipoyl domains of lipoate-dependent enzymes. The polypeptide is Lipoate-protein ligase A (Escherichia coli O9:H4 (strain HS)).